A 274-amino-acid polypeptide reads, in one-letter code: Mitogen-activated protein kinase 4 (274 aa).

Residues 1 to 8 and lysine 23 each bind ATP; that span reads GCGGNGLV. In terms of domain architecture, Protein kinase spans 1-274; the sequence is GCGGNGLVLS…KILTFSPMDR (274 aa). Aspartate 123 functions as the Proton acceptor in the catalytic mechanism. Serine 160 bears the Phosphoserine mark. Residues 160-162 carry the SEG motif motif; that stretch reads SEG.

This sequence belongs to the protein kinase superfamily. CMGC Ser/Thr protein kinase family. MAP kinase subfamily. Homodimer. Heterodimer with ERK3/MAPK6. Interacts with MAPKAPK5. The cofactor is Mg(2+). Post-translationally, phosphorylated by PAK1, PAK2 and PAK3 in the activation loop resulting in catalytic activation. Phosphorylated by MAPKAPK5 at other sites. In terms of tissue distribution, exclusively detected in the brain, where expression is restricted to the choroid plexus and hippocampus, and to a lesser extent in lung.

It is found in the cytoplasm. Its subcellular location is the nucleus. The enzyme catalyses L-seryl-[protein] + ATP = O-phospho-L-seryl-[protein] + ADP + H(+). It catalyses the reaction L-threonyl-[protein] + ATP = O-phospho-L-threonyl-[protein] + ADP + H(+). Its activity is regulated as follows. Activated by phosphorylation in the activation loop. In terms of biological role, atypical MAPK protein. Phosphorylates microtubule-associated protein 2 (MAP2) and MAPKAPK5. The precise role of the complex formed with MAPKAPK5 is still unclear, but the complex follows a complex set of phosphorylation events: upon interaction with atypical MAPKAPK5, ERK4/MAPK4 is phosphorylated and then mediates phosphorylation and activation of MAPKAPK5, which in turn phosphorylates ERK4/MAPK4. May promote entry in the cell cycle. This Rattus norvegicus (Rat) protein is Mitogen-activated protein kinase 4 (Mapk4).